The primary structure comprises 821 residues: Protein EFR3 homolog A (821 aa).

Residues Ser-360, Ser-363, Ser-422, and Ser-694 each carry the phosphoserine modification.

It belongs to the EFR3 family. In terms of assembly, component of a phosphatidylinositol 4-kinase (PI4K) complex, composed of PI4KA, EFR3 (EFR3A or EFR3B), TTC7 (TTC7A or TTC7B) and HYCC (HYCC1 or HYCC2). In terms of processing, palmitoylated at its N-terminus, anchoring the protein to the plasma membrane.

The protein resides in the cell membrane. Its subcellular location is the cytoplasm. It localises to the cytosol. Component of a complex required to localize phosphatidylinositol 4-kinase (PI4K) to the plasma membrane. The complex acts as a regulator of phosphatidylinositol 4-phosphate (PtdIns(4)P) synthesis. In the complex, EFR3A probably acts as the membrane-anchoring component. Also involved in responsiveness to G-protein-coupled receptors; it is however unclear whether this role is direct or indirect. The chain is Protein EFR3 homolog A from Homo sapiens (Human).